An 84-amino-acid polypeptide reads, in one-letter code: MKYFVIALALAVALVCIAESTAYEVNEELENELDDLDDAAWLAVAEELQGLEDFEESRGLFGKLIKKFGRKAISYAVKKARGKN.

The first 22 residues, 1-22, serve as a signal peptide directing secretion; that stretch reads MKYFVIALALAVALVCIAESTA. Positions 23–58 are excised as a propeptide; that stretch reads YEVNEELENELDDLDDAAWLAVAEELQGLEDFEESR. Positions 55–58 match the Processing quadruplet motif motif; that stretch reads EESR.

In terms of processing, cleavage of the propeptide depends on the processing quadruplet motif (XXXR, with at least one of X being E). Expressed by the venom gland.

It is found in the secreted. In terms of biological role, has antimicrobial activity against both Gram-positive and Gram-negative bacteria, and yeasts. Also has a strong hemolytic activity against rabbit erythrocytes. Causes paralysis, but is not lethal when injected into insect (M.domestica) larvae. In Lachesana tarabaevi (Spider), this protein is M-zodatoxin-Lt2b.